The chain runs to 283 residues: Accumulation of dyads protein 2 (283 aa).

Positions 1-41 (MSDKEQTSGNTDLENAPAGYYSSHDNDVNGVAEDERPSHDS) are disordered. The Cytoplasmic segment spans residues 1–89 (MSDKEQTSGN…APAPVHKFAN (89 aa)). A helical membrane pass occupies residues 90–110 (PAPLGLSAFALTTFVLSMFNA). The Extracellular portion of the chain corresponds to 111–120 (RAQGITVPNV). The helical transmembrane segment at 121-141 (VVGCAMFYGGLVQLIAGIWEI) threads the bilayer. The Cytoplasmic portion of the chain corresponds to 142 to 151 (ALENTFGGTA). A helical membrane pass occupies residues 152 to 172 (LCSYGGFWLSFAAIYIPWFGI). The Extracellular portion of the chain corresponds to 173–185 (LEAYEDNESDLNN). Residues 186–206 (ALGFYLLGWAIFTFGLTVCTM) form a helical membrane-spanning segment. Over 207-208 (KS) the chain is Cytoplasmic. The helical transmembrane segment at 209-229 (TVMFFLLFFLLALTFLLLSIG) threads the bilayer. The Extracellular segment spans residues 230 to 240 (HFANRLGVTRA). The helical transmembrane segment at 241 to 261 (GGVLGVVVAFIAWYNAYAGVA) threads the bilayer. Over 262–283 (TKQNSYVLARPFPLPSTERVIF) the chain is Cytoplasmic.

The protein belongs to the acetate uptake transporter (AceTr) (TC 2.A.96) family.

The protein localises to the cell membrane. Its subcellular location is the vacuole membrane. Transporter protein required for ammonia export and acetate uptake and resistance. Necessary for up-regulation and down-regulation of meiotic plaque (MP) component levels in a dependency on external acetate. Has a role in ascus formation. In Saccharomyces cerevisiae (strain ATCC 204508 / S288c) (Baker's yeast), this protein is Accumulation of dyads protein 2 (ADY2).